The primary structure comprises 92 residues: uncharacterized protein (92 aa).

To M.jannaschii MJ0782.1.

This is an uncharacterized protein from Methanothermobacter thermautotrophicus (strain ATCC 29096 / DSM 1053 / JCM 10044 / NBRC 100330 / Delta H) (Methanobacterium thermoautotrophicum).